The following is a 52-amino-acid chain: Stable plasmid inheritance protein (52 aa).

A helical membrane pass occupies residues 6-26 (SSLVWCVLIVCLTLLIFTYLT).

It belongs to the Hok/Gef family.

It is found in the cell inner membrane. In terms of biological role, toxic component of a type I toxin-antitoxin (TA) system. Part of the plasmid maintenance system, encodes a toxic protein that collapses the transmembrane potential and arrests respiration. When the adjacent non-translated flmB (sok) gene is disrupted FlmA no longer functions in plasmid maintenance (i.e. FlmB probably encodes an antisense antitoxin RNA). Translation of FlmA may be coupled to the upstream flmC gene. The protein is Stable plasmid inheritance protein (flmA) of Escherichia coli O157:H7.